The sequence spans 579 residues: Folliculin (579 aa).

The disordered stretch occupies residues Gly-32 to Cys-82. Residues Ser-62 and Ser-73 each carry the phosphoserine modification. The 157-residue stretch at Arg-86–Thr-242 folds into the uDENN FLCN/SMCR8-type domain. A coiled-coil region spans residues Glu-287–Ala-310. Residues Glu-294–Glu-308 are compositionally biased toward acidic residues. Residues Glu-294–Arg-320 form a disordered region. A phosphoserine mark is found at Ser-302, Ser-406, Ser-537, Ser-542, and Ser-571. The 153-residue stretch at Gln-339–Thr-491 folds into the cDENN FLCN/SMCR8-type domain. Positions Gln-493–Ser-558 constitute a dDENN FLCN/SMCR8-type domain.

It belongs to the folliculin family. As to quaternary structure, interacts (via C-terminus) with FNIP1 or FNIP2 (via C-terminus). Component of the lysosomal folliculin complex (LFC), composed of FLCN, FNIP1 (or FNIP2), RagA/RRAGA or RagB/RRAGB GDP-bound, RagC/RRAGC or RagD/RRAGD GTP-bound, and Ragulator. Interaction with FNIP1 or FNIP2 mediates indirect interaction with the PRKAA1, PRKAB1 and PRKAG1 subunits of 5'-AMP-activated protein kinase (AMPK). Interacts with HSP90AA1 in the presence of FNIP1. Interacts with HSP70, STUB1, CDC37, AHSA1, CCT2, STIP1, PTGES3 and PPP5C. Interacts with GABARAP; interaction takes place in the presence of FNIP1 and/or FNIP2. Interacts with RILP; the interaction is direct and promotes association between RILP and RAB34. Interacts with KIF3A and KIF3B. Interacts with lactate dehydrogenase LDHA, but not LDHB; the interaction is direct, may preferentially bind LDHA dimers rather than tetramers, and regulates LDHA activity, acting as an uncompetitive inhibitor. In terms of processing, phosphorylation by ULK1 modulates the interaction with GABARAP and is required to regulate autophagy. As to expression, expressed in kidney.

It localises to the lysosome membrane. It is found in the cytoplasm. The protein localises to the cytosol. The protein resides in the cell projection. Its subcellular location is the cilium. It localises to the cytoskeleton. It is found in the microtubule organizing center. The protein localises to the centrosome. The protein resides in the spindle. Its subcellular location is the nucleus. With respect to regulation, GTPase-activating activity is inhibited in the folliculin complex (LFC), which stabilizes the GDP-bound state of RagA/RRAGA (or RagB/RRAGB), because Arg-164 is located far from the RagC/RRAGC or RagD/RRAGD nucleotide pocket. Disassembly of the LFC complex upon amino acid restimulation liberates the GTPase-activating activity. Multi-functional protein, involved in both the cellular response to amino acid availability and in the regulation of glycolysis. GTPase-activating protein that plays a key role in the cellular response to amino acid availability through regulation of the non-canonical mTORC1 signaling cascade controlling the MiT/TFE factors TFEB and TFE3. Activates mTORC1 by acting as a GTPase-activating protein: specifically stimulates GTP hydrolysis by RagC/RRAGC or RagD/RRAGD, promoting the conversion to the GDP-bound state of RagC/RRAGC or RagD/RRAGD, and thereby activating the kinase activity of mTORC1. The GTPase-activating activity is inhibited during starvation and activated in presence of nutrients. Acts as a key component for non-canonical mTORC1-dependent control of the MiT/TFE factors TFEB and TFE3, while it is not involved in mTORC1-dependent phosphorylation of canonical RPS6KB1/S6K1 and EIF4EBP1/4E-BP1. In low-amino acid conditions, the lysosomal folliculin complex (LFC) is formed on the membrane of lysosomes, which inhibits the GTPase-activating activity of FLCN, inactivates mTORC1 and maximizes nuclear translocation of TFEB and TFE3. Upon amino acid restimulation, RagA/RRAGA (or RagB/RRAGB) nucleotide exchange promotes disassembly of the LFC complex and liberates the GTPase-activating activity of FLCN, leading to activation of mTORC1 and subsequent cytoplasmic retention of TFEB and TFE3. Indirectly acts as a positive regulator of Wnt signaling by promoting mTOR-dependent cytoplasmic retention of MiT/TFE factor TFE3. Required for the exit of hematopoietic stem cell from pluripotency by promoting mTOR-dependent cytoplasmic retention of TFE3, thereby increasing Wnt signaling. Involved in the control of embryonic stem cells differentiation; together with LAMTOR1 it is necessary to recruit and activate RagC/RRAGC and RagD/RRAGD at the lysosomes, and to induce exit of embryonic stem cells from pluripotency via non-canonical, mTOR-independent TFE3 inactivation. Acts as an inhibitor of browning of adipose tissue by regulating mTOR-dependent cytoplasmic retention of TFE3. In response to flow stress, regulates STK11/LKB1 accumulation and mTORC1 activation through primary cilia: may act by recruiting STK11/LKB1 to primary cilia for activation of AMPK resided at basal bodies, causing mTORC1 down-regulation. Together with FNIP1 and/or FNIP2, regulates autophagy: following phosphorylation by ULK1, interacts with GABARAP and promotes autophagy. Required for starvation-induced perinuclear clustering of lysosomes by promoting association of RILP with its effector RAB34. Regulates glycolysis by binding to lactate dehydrogenase LDHA, acting as an uncompetitive inhibitor. This chain is Folliculin, found in Rattus norvegicus (Rat).